The following is a 139-amino-acid chain: MIVDTSAVVALVQGERPHATLVAAALAGAHSPVMSAPTVAECLIVLTARHGPVARTIFERLRSEIGLSVSSFTAEHAAATQRAFLRYGKGRHRAALNFGDCMTYATAQLGHQPLLAVGNDFPQTDLEFRGVVGYWPGVA.

The PINc domain maps to Met-1 to Glu-127. Mg(2+)-binding residues include Asp-4 and Asp-100.

This sequence belongs to the PINc/VapC protein family. It depends on Mg(2+) as a cofactor.

Its function is as follows. Toxic component of a type II toxin-antitoxin (TA) system. An RNase. Its cognate antitoxin is VapB36. This Mycobacterium tuberculosis (strain ATCC 25618 / H37Rv) protein is Ribonuclease VapC36.